Here is a 521-residue protein sequence, read N- to C-terminus: Proactivator polypeptide-like 1 (521 aa).

Positions 1-17 (MLCALLLLPSLLGATRA) are cleaved as a signal peptide. The propeptide occupies 18–59 (SPTSGPQECAKGSTVWCQDLQTAARCGAVGYCQGAVWNKPTA). The Saposin A-type 1 domain maps to 19-59 (PTSGPQECAKGSTVWCQDLQTAARCGAVGYCQGAVWNKPTA). Saposin B-type domains follow at residues 60 to 144 (KSLP…EPLQ) and 180 to 258 (EGAL…EELG). Intrachain disulfides connect Cys64–Cys140, Cys67–Cys134, and Cys95–Cys107. Positions 146-180 (HLATLRPLSKEDTFEAVAPFMANGPLTFHPRQAPE) are excised as a propeptide. Disulfide bonds link Cys184/Cys254, Cys187/Cys248, and Cys213/Cys224. Asn201 carries an N-linked (GlcNAc...) asparagine glycan. The propeptide occupies 259–288 (APARLTQVVAMDGVPSLELGLPRKQSEMQM). Saposin B-type domains follow at residues 290–370 (AGVT…GNRR) and 392–473 (QGSF…HGPR). 3 disulfides stabilise this stretch: Cys294/Cys366, Cys297/Cys360, and Cys325/Cys336. An N-linked (GlcNAc...) asparagine glycan is attached at Asn311. A propeptide spanning residues 370 to 391 (RRARAVHDAYAIVPSPEWDAEN) is cleaved from the precursor. 3 disulfides stabilise this stretch: Cys396–Cys469, Cys399–Cys463, and Cys427–Cys438. A propeptide spanning residues 474 to 521 (TPLLGTDQCALGPSFWCRSQEAAKLCNAVQHCQKHVWKEMHLHAGEHA) is cleaved from the precursor. A Saposin A-type 2 domain is found at 475 to 515 (PLLGTDQCALGPSFWCRSQEAAKLCNAVQHCQKHVWKEMHL).

The protein localises to the secreted. Its function is as follows. May activate the lysosomal degradation of sphingolipids. In Homo sapiens (Human), this protein is Proactivator polypeptide-like 1 (PSAPL1).